The primary structure comprises 78 residues: Omega-conotoxin-like Ac6.5 (78 aa).

Residues 1 to 22 (MKLTCVVIVAVLLLTACQLLTA) form the signal peptide. The propeptide occupies 23–42 (DDSRGTQKHRSLRSTTKVSK). Cystine bridges form between Cys46–Cys62, Cys53–Cys65, and Cys61–Cys72. Pro55 and Pro67 each carry 4-hydroxyproline.

This sequence belongs to the conotoxin O1 superfamily. As to expression, expressed by the venom duct.

The protein localises to the secreted. In terms of biological role, omega-conotoxins act at presynaptic membranes, they bind and block voltage-gated calcium channels (Cav). The chain is Omega-conotoxin-like Ac6.5 from Conus achatinus (Little frog cone).